Here is a 406-residue protein sequence, read N- to C-terminus: Exodeoxyribonuclease 7 large subunit (406 aa).

The protein belongs to the XseA family. Heterooligomer composed of large and small subunits.

It localises to the cytoplasm. It carries out the reaction Exonucleolytic cleavage in either 5'- to 3'- or 3'- to 5'-direction to yield nucleoside 5'-phosphates.. Its function is as follows. Bidirectionally degrades single-stranded DNA into large acid-insoluble oligonucleotides, which are then degraded further into small acid-soluble oligonucleotides. This chain is Exodeoxyribonuclease 7 large subunit, found in Desulfitobacterium hafniense (strain Y51).